The primary structure comprises 598 residues: Nuclear receptor subfamily 4 group A member 1 (598 aa).

Disordered stretches follow at residues 1-50 and 120-159; these read MPCI…PTAL and LDET…GSFG. 2 stretches are compositionally biased toward low complexity: residues 37–50 and 134–145; these read LASP…PTAL and SPCSAPSPSTPS. The tract at residues 171–466 is required for nuclear import; it reads RAWTEQLPKA…PAEGKLIFCS (296 aa). The segment at residues 264–339 is a DNA-binding region (nuclear receptor); sequence EGRCAVCGDN…VGMVKEVVRT (76 aa). NR C4-type zinc fingers lie at residues 267–287 and 303–327; these read CAVC…CEGC and CLAN…FQKC. Positions 268 to 354 are required for binding NBRE-containing DNA; sequence AVCGDNASCQ…RRGRLPSKPK (87 aa). The segment at 299–361 is required for the interaction with RXRA; it reads AKYICLANKD…KPKQPPDASP (63 aa). S341 is modified (phosphoserine; by PKA). Residues 341–361 form a disordered region; the sequence is SLKGRRGRLPSKPKQPPDASP. Position 351 is a phosphoserine; by PKA, RPS6KA1 and RPS6KA3 (S351). In terms of domain architecture, NR LBD spans 360–595; the sequence is SPANLLTSLV…PIVDKIFMDT (236 aa). Positions 521-544 are binds lipopolysaccharide; the sequence is PRRVEELQNRIASCLKEHVSAVAG. An AF-2 region spans residues 584 to 595; the sequence is PPPIVDKIFMDT.

This sequence belongs to the nuclear hormone receptor family. NR4 subfamily. As to quaternary structure, binds the NGFI-B response element (NBRE) as a monomer. Binds the Nur response element (NurRE), consisting of two inverse NBRE-related octanucleotide repeats separated by 6 base-pairs, as a dimer. Interacts (via N-terminus) with NLRP3 (via LRR repeat domain); the interaction is direct, requires binding of NR4A1/Nur77 to NBRE-containing dsDNA and lipopolysaccharide, and leads to non-canonical NLRP3 inflammasome activation. Interacts with GADD45GIP1. Interacts with STK11. Heterodimer (via DNA-binding domain) with RXRA (via C-terminus); DNA-binding of the heterodimer is enhanced by 9-cis retinoic acid. Competes for the RXRA interaction with EP300 and thereby attenuates EP300 mediated acetylation of RXRA. Interacts with NCOA1. Interacts with NCOA2. Interacts with NCOA3. Zn(2+) serves as cofactor. Post-translationally, phosphorylated at Ser-351 by RPS6KA1 and RPS6KA3 in response to mitogenic or stress stimuli. In terms of processing, acetylated by p300/CBP, acetylation increases stability. Deacetylated by HDAC1.

The protein localises to the cytoplasm. Its subcellular location is the cytosol. The protein resides in the nucleus. It localises to the mitochondrion. Its function is as follows. Orphan nuclear receptor. Binds the NGFI-B response element (NBRE) 5'-AAAGGTCA-3'. Binds 9-cis-retinoic acid outside of its ligand-binding (NR LBD) domain. Participates in energy homeostasis by sequestrating the kinase STK11 in the nucleus, thereby attenuating cytoplasmic AMPK activation. Regulates the inflammatory response in macrophages by regulating metabolic adaptations during inflammation, including repressing the transcription of genes involved in the citric acid cycle (TCA). Inhibits NF-kappa-B signaling by binding to low-affinity NF-kappa-B binding sites, such as at the IL2 promoter. May act concomitantly with NR4A2 in regulating the expression of delayed-early genes during liver regeneration. Plays a role in the vascular response to injury. In the cytosol, upon its detection of both bacterial lipopolysaccharide (LPS) and NBRE-containing mitochondrial DNA released by GSDMD pores during pyroptosis, it promotes non-canonical NLRP3 inflammasome activation by stimulating association of NLRP3 and NEK7. In Canis lupus familiaris (Dog), this protein is Nuclear receptor subfamily 4 group A member 1 (NR4A1).